The following is a 61-amino-acid chain: Large ribosomal subunit protein uL30 (61 aa).

The protein belongs to the universal ribosomal protein uL30 family. Part of the 50S ribosomal subunit.

This Laribacter hongkongensis (strain HLHK9) protein is Large ribosomal subunit protein uL30.